The following is a 264-amino-acid chain: Small ribosomal subunit protein eS1 (264 aa).

Lysine 34 bears the N6-acetyllysine; alternate mark. Lysine 34 participates in a covalent cross-link: Glycyl lysine isopeptide (Lys-Gly) (interchain with G-Cter in SUMO2); alternate. Lysine 56 is subject to N6-acetyllysine. At tyrosine 155 the chain carries ADP-ribosyltyrosine. Residues 233–264 (GEGSSSGKATGDETGAKVERADGYEPPVQESV) form a disordered region. Serine 236 and serine 237 each carry phosphoserine. Basic and acidic residues predominate over residues 242–255 (TGDETGAKVERADG). Lysine 249 is modified (N6-acetyllysine; alternate). A Glycyl lysine isopeptide (Lys-Gly) (interchain with G-Cter in SUMO2); alternate cross-link involves residue lysine 249. Tyrosine 256 carries the phosphotyrosine modification. Residue serine 263 is modified to Phosphoserine.

It belongs to the eukaryotic ribosomal protein eS1 family. As to quaternary structure, component of the small ribosomal subunit. Mature ribosomes consist of a small (40S) and a large (60S) subunit. The 40S subunit contains about 33 different proteins and 1 molecule of RNA (18S). The 60S subunit contains about 49 different proteins and 3 molecules of RNA (28S, 5.8S and 5S). Part of the small subunit (SSU) processome, composed of more than 70 proteins and the RNA chaperone small nucleolar RNA (snoRNA) U3. In terms of processing, ADP-ribosylated at Tyr-155 by PARP1 in presence of HPF1.

The protein localises to the cytoplasm. It localises to the nucleus. It is found in the nucleolus. Component of the small ribosomal subunit. The ribosome is a large ribonucleoprotein complex responsible for the synthesis of proteins in the cell. Part of the small subunit (SSU) processome, first precursor of the small eukaryotic ribosomal subunit. During the assembly of the SSU processome in the nucleolus, many ribosome biogenesis factors, an RNA chaperone and ribosomal proteins associate with the nascent pre-rRNA and work in concert to generate RNA folding, modifications, rearrangements and cleavage as well as targeted degradation of pre-ribosomal RNA by the RNA exosome. May play a role during erythropoiesis. The protein is Small ribosomal subunit protein eS1 of Callithrix jacchus (White-tufted-ear marmoset).